The sequence spans 179 residues: uncharacterized protein (179 aa).

It localises to the virion. This is an uncharacterized protein from Acanthamoeba polyphaga (Amoeba).